The following is a 562-amino-acid chain: Arginine--tRNA ligase (562 aa).

The 'HIGH' region motif lies at 136 to 146 (ANPTGPMHMGN).

The protein belongs to the class-I aminoacyl-tRNA synthetase family. In terms of assembly, monomer.

It is found in the cytoplasm. The catalysed reaction is tRNA(Arg) + L-arginine + ATP = L-arginyl-tRNA(Arg) + AMP + diphosphate. This chain is Arginine--tRNA ligase (argS), found in Caldanaerobacter subterraneus subsp. tengcongensis (strain DSM 15242 / JCM 11007 / NBRC 100824 / MB4) (Thermoanaerobacter tengcongensis).